A 280-amino-acid chain; its full sequence is Fructose-1,6-bisphosphatase class 1 (280 aa).

Mg(2+)-binding residues include Glu-64, Asp-83, Leu-85, and Asp-86. Residues 86–89 (DGSS), Tyr-189, and Lys-220 each bind substrate. Glu-226 contributes to the Mg(2+) binding site.

It belongs to the FBPase class 1 family. Homotetramer. Requires Mg(2+) as cofactor.

It is found in the cytoplasm. The catalysed reaction is beta-D-fructose 1,6-bisphosphate + H2O = beta-D-fructose 6-phosphate + phosphate. The protein operates within carbohydrate biosynthesis; gluconeogenesis. This Campylobacter jejuni subsp. jejuni serotype O:23/36 (strain 81-176) protein is Fructose-1,6-bisphosphatase class 1.